We begin with the raw amino-acid sequence, 346 residues long: Biotin synthase (346 aa).

Residues 38–256 (QQVQVSTLLS…IAVARIMMPT (219 aa)) form the Radical SAM core domain. [4Fe-4S] cluster contacts are provided by cysteine 53, cysteine 57, and cysteine 60. Positions 97, 128, 188, and 260 each coordinate [2Fe-2S] cluster.

It belongs to the radical SAM superfamily. Biotin synthase family. As to quaternary structure, homodimer. [4Fe-4S] cluster serves as cofactor. It depends on [2Fe-2S] cluster as a cofactor.

The catalysed reaction is (4R,5S)-dethiobiotin + (sulfur carrier)-SH + 2 reduced [2Fe-2S]-[ferredoxin] + 2 S-adenosyl-L-methionine = (sulfur carrier)-H + biotin + 2 5'-deoxyadenosine + 2 L-methionine + 2 oxidized [2Fe-2S]-[ferredoxin]. It functions in the pathway cofactor biosynthesis; biotin biosynthesis; biotin from 7,8-diaminononanoate: step 2/2. In terms of biological role, catalyzes the conversion of dethiobiotin (DTB) to biotin by the insertion of a sulfur atom into dethiobiotin via a radical-based mechanism. The chain is Biotin synthase from Citrobacter koseri (strain ATCC BAA-895 / CDC 4225-83 / SGSC4696).